The sequence spans 96 residues: Large ribosomal subunit protein eL21 (96 aa).

The disordered stretch occupies residues 1–66 (MPSSNGPLEG…FDGQTGTVEG (66 aa)).

It belongs to the eukaryotic ribosomal protein eL21 family. Part of the 50S ribosomal subunit. Interacts with protein L18 and binds the 5S rRNA. Has been cross-linked to L18.

This is one of 5 proteins that mediate the attachment of the 5S rRNA onto the large ribosomal subunit, stabilizing the orientation of adjacent RNA domains. This chain is Large ribosomal subunit protein eL21 (rpl21e), found in Haloarcula marismortui (strain ATCC 43049 / DSM 3752 / JCM 8966 / VKM B-1809) (Halobacterium marismortui).